Reading from the N-terminus, the 124-residue chain is MNDQLTAIYTELLLMKEELQSRLFEYSCFQVSTSPQAAINQKQKATLIYHIKEELQDVLLALSKIENGTFGYCEETGAPIPLAKLAVLPTARTANDFLYSVQFEKKTLPIWKSTDIEYGQALYE.

The segment at 73-94 adopts a dksA C4-type; degenerate zinc-finger fold; that stretch reads CEETGAPIPLAKLAVLPTARTA.

This is an uncharacterized protein from Bacillus subtilis (strain 168).